A 209-amino-acid chain; its full sequence is Redox-sensing transcriptional repressor Rex (209 aa).

Positions 16 to 55 (LYYRFIQNLSLSGKQRVSSAELSEAVKVDSATIRRDFSYF) form a DNA-binding region, H-T-H motif. 90–95 (GVGNLG) is a binding site for NAD(+).

Belongs to the transcriptional regulatory Rex family. As to quaternary structure, homodimer.

The protein resides in the cytoplasm. In terms of biological role, modulates transcription in response to changes in cellular NADH/NAD(+) redox state. The polypeptide is Redox-sensing transcriptional repressor Rex (Bacillus cereus (strain G9842)).